A 357-amino-acid chain; its full sequence is Protein-glutamate methylesterase/protein-glutamine glutaminase 1 (357 aa).

The 118-residue stretch at 10–127 (RTLIVDDSAF…DVNKIEKELV (118 aa)) folds into the Response regulatory domain. Asp61 carries the 4-aspartylphosphate modification. A CheB-type methylesterase domain is found at 159–353 (SCAGDFAVLI…EEIVRMSEVK (195 aa)). Residues Ser171, His198, and Asp295 contribute to the active site.

This sequence belongs to the CheB family. In terms of processing, phosphorylated by CheA. Phosphorylation of the N-terminal regulatory domain activates the methylesterase activity.

Its subcellular location is the cytoplasm. The enzyme catalyses [protein]-L-glutamate 5-O-methyl ester + H2O = L-glutamyl-[protein] + methanol + H(+). The catalysed reaction is L-glutaminyl-[protein] + H2O = L-glutamyl-[protein] + NH4(+). Involved in chemotaxis. Part of a chemotaxis signal transduction system that modulates chemotaxis in response to various stimuli. Catalyzes the demethylation of specific methylglutamate residues introduced into the chemoreceptors (methyl-accepting chemotaxis proteins or MCP) by CheR. Also mediates the irreversible deamidation of specific glutamine residues to glutamic acid. This is Protein-glutamate methylesterase/protein-glutamine glutaminase 1 from Methanosarcina mazei (strain ATCC BAA-159 / DSM 3647 / Goe1 / Go1 / JCM 11833 / OCM 88) (Methanosarcina frisia).